Here is a 291-residue protein sequence, read N- to C-terminus: MTVDSKPQLQRLAADADVDRMCRLLEEDGAFILKGLLPFDVVESFNRELDVQMAIPPPKGERLLADKYPPHFKYVPNVATTCPTFRNTVLINPVIHAICEAYFQRTGDYWLSAAFLREIESGMPAQPFHRDDATHPLMHYQPLEAPPVSLSVIFPLTEFTEENGATEVILGSHRWTEVGTPERDQAVLATMDPGDVLIVRQRVVHAGGGNRTTAGKPRRVVLAYFNSVQLTPFETYRTMPREMVESMTVLGQRMLGWRTMKPSDPNIVGINLIDDKRLENVLQLKAADSPA.

Tyrosine 68 is a catalytic residue.

Belongs to the PhyH family. In terms of assembly, homodimer. Fe cation serves as cofactor.

The catalysed reaction is fumitremorgin B + 2-oxoglutarate + AH2 + 2 O2 = verruculogen + succinate + A + CO2 + H2O. The protein operates within mycotoxin biosynthesis. Verruculogen synthase; part of the gene cluster that mediates the biosynthesis of fumitremorgins, indole alkaloids that carry not only intriguing chemical structures, but also interesting biological and pharmacological activities. The biosynthesis of fumitremorgin-type alkaloids begins by condensation of the two amino acids L-tryptophan and L-proline to brevianamide F, catalyzed by the non-ribosomal peptide synthetase ftmA. Brevianamide F is then prenylated by the prenyltransferase ftmPT1/ftmB in the presence of dimethylallyl diphosphate, resulting in the formation of tryprostatin B. The three cytochrome P450 monooxygenases, ftmP450-1/ftmC, ftmP450-2/ftmE and ftmP450-3/FtmG, are responsible for the conversion of tryprostatin B to 6-hydroxytryprostatin B, tryprostatin A to fumitremorgin C and fumitremorgin C to 12,13-dihydroxyfumitremorgin C, respectively. The putative methyltransferase ftmMT/ftmD is expected for the conversion of 6-hydroxytryprostatin B to tryprostatin A. FtmPT2/FtmH catalyzes the prenylation of 12,13-dihydroxyfumitre-morgin C in the presence of dimethylallyl diphosphate, resulting in the formation of fumitremorgin B. Fumitremorgin B is further converted to verruculogen by ftmOx1/ftmF via the insertion of an endoperoxide bond between the two prenyl moieties. In some fungal species, verruculogen is further converted to fumitremorgin A, but the enzymes involved in this step have not been identified yet. In Aspergillus fumigatus (strain ATCC MYA-4609 / CBS 101355 / FGSC A1100 / Af293) (Neosartorya fumigata), this protein is Verruculogen synthase.